The chain runs to 33 residues: Brevinin-2JD (33 aa).

Cys-27 and Cys-33 are disulfide-bonded.

In terms of tissue distribution, expressed by the skin glands.

The protein resides in the secreted. Functionally, has antibacterial activity against E.coli ATCC 25992 (MIC=38 uM), E.coli CIB 84492 (MIC=38 uM), S.aureus ATCC 25923 (MIC=19 uM) and S.aureus CIB 85462 (MIC=19 uM). Has antifungal activity against C.albicans (MIC=19 uM). Has weak hemolytic activity against rabbit erythrocytes. The sequence is that of Brevinin-2JD from Odorrana jingdongensis (Jingdong frog).